An 863-amino-acid chain; its full sequence is Adenosylcobalamin biosynthesis bifunctional protein CobDQ (863 aa).

Positions 1-373 (MNLPEHGGNL…LKSRKKTPSI (373 aa)) are putative threonine-phosphate decarboxylase. O-phospho-L-threonine-binding positions include 6-7 (HG), asparagine 30, and asparagine 159. Lysine 214 carries the post-translational modification N6-(pyridoxal phosphate)lysine. O-phospho-L-threonine-binding residues include arginine 323 and arginine 337. The cobyric acid synthase stretch occupies residues 374–863 (MFQGTASNVG…NLIYRKLGLG (490 aa)). Residues 622-810 (RLDVVLIDIP…IHGIFDKDEF (189 aa)) form the GATase cobBQ-type domain. The active-site Nucleophile is the cysteine 704. The active site involves histidine 802.

It in the N-terminal section; belongs to the class-II pyridoxal-phosphate-dependent aminotransferase family. In the C-terminal section; belongs to the CobB/CobQ family. CobQ subfamily. Pyridoxal 5'-phosphate serves as cofactor.

It catalyses the reaction O-phospho-L-threonine + H(+) = (R)-1-aminopropan-2-yl phosphate + CO2. It functions in the pathway cofactor biosynthesis; adenosylcobalamin biosynthesis. Catalyzes two activities which are involved in the adenosylcobalamin biosynthesis: decarboxylates L-threonine-O-3-phosphate to yield (R)-1-amino-2-propanol O-2-phosphate, the precursor for the linkage between the nucleotide loop and the corrin ring in cobalamin, and catalyzes amidations at positions B, D, E, and G on adenosylcobyrinic A,C-diamide. NH(2) groups are provided by glutamine, and one molecule of ATP is hydrogenolyzed for each amidation. This Leptospira interrogans serogroup Icterohaemorrhagiae serovar Lai (strain 56601) protein is Adenosylcobalamin biosynthesis bifunctional protein CobDQ (cobDQ).